A 227-amino-acid polypeptide reads, in one-letter code: Cytochrome c oxidase subunit 2 (227 aa).

Residues 1 to 14 are Mitochondrial intermembrane-facing; it reads MAYPFELGFQDATS. Residues 15–45 form a helical membrane-spanning segment; that stretch reads PIMEELLHFHDHTLMIVFLISSLVLYIISLM. Over 46-59 the chain is Mitochondrial matrix; the sequence is LTTKLTHTSTMDAQ. The helical transmembrane segment at 60-87 threads the bilayer; it reads EIETIWTILPAIILILIALPSLRILYMM. At 88-227 the chain is on the mitochondrial intermembrane side; the sequence is DEINDPSLTV…HFENWSSSML (140 aa). Cu cation is bound by residues His-161, Cys-196, Glu-198, Cys-200, His-204, and Met-207. Glu-198 contacts Mg(2+).

The protein belongs to the cytochrome c oxidase subunit 2 family. As to quaternary structure, component of the cytochrome c oxidase (complex IV, CIV), a multisubunit enzyme composed of 14 subunits. The complex is composed of a catalytic core of 3 subunits MT-CO1, MT-CO2 and MT-CO3, encoded in the mitochondrial DNA, and 11 supernumerary subunits COX4I, COX5A, COX5B, COX6A, COX6B, COX6C, COX7A, COX7B, COX7C, COX8 and NDUFA4, which are encoded in the nuclear genome. The complex exists as a monomer or a dimer and forms supercomplexes (SCs) in the inner mitochondrial membrane with NADH-ubiquinone oxidoreductase (complex I, CI) and ubiquinol-cytochrome c oxidoreductase (cytochrome b-c1 complex, complex III, CIII), resulting in different assemblies (supercomplex SCI(1)III(2)IV(1) and megacomplex MCI(2)III(2)IV(2)). Found in a complex with TMEM177, COA6, COX18, COX20, SCO1 and SCO2. Interacts with TMEM177 in a COX20-dependent manner. Interacts with COX20. Interacts with COX16. Cu cation serves as cofactor.

The protein resides in the mitochondrion inner membrane. The enzyme catalyses 4 Fe(II)-[cytochrome c] + O2 + 8 H(+)(in) = 4 Fe(III)-[cytochrome c] + 2 H2O + 4 H(+)(out). Component of the cytochrome c oxidase, the last enzyme in the mitochondrial electron transport chain which drives oxidative phosphorylation. The respiratory chain contains 3 multisubunit complexes succinate dehydrogenase (complex II, CII), ubiquinol-cytochrome c oxidoreductase (cytochrome b-c1 complex, complex III, CIII) and cytochrome c oxidase (complex IV, CIV), that cooperate to transfer electrons derived from NADH and succinate to molecular oxygen, creating an electrochemical gradient over the inner membrane that drives transmembrane transport and the ATP synthase. Cytochrome c oxidase is the component of the respiratory chain that catalyzes the reduction of oxygen to water. Electrons originating from reduced cytochrome c in the intermembrane space (IMS) are transferred via the dinuclear copper A center (CU(A)) of subunit 2 and heme A of subunit 1 to the active site in subunit 1, a binuclear center (BNC) formed by heme A3 and copper B (CU(B)). The BNC reduces molecular oxygen to 2 water molecules using 4 electrons from cytochrome c in the IMS and 4 protons from the mitochondrial matrix. In Tamias townsendii (Townsend's chipmunk), this protein is Cytochrome c oxidase subunit 2 (MT-CO2).